The primary structure comprises 437 residues: Transmembrane protein with metallophosphoesterase domain (437 aa).

Transmembrane regions (helical) follow at residues 7-27, 41-61, 87-107, 116-136, and 164-184; these read LSAE…MLIS, ALLF…LGSL, IIVL…FFLV, LLSF…FVFG, and VLAL…AAQP. A divalent metal cation is bound by residues D211, H213, D243, N274, H376, and H378.

Belongs to the metallophosphoesterase superfamily. LOC643853 family. It depends on a divalent metal cation as a cofactor.

Its subcellular location is the membrane. In Danio rerio (Zebrafish), this protein is Transmembrane protein with metallophosphoesterase domain (tmppe).